The following is an 802-amino-acid chain: Mitochondrial inner membrane m-AAA protease component AFG3L2 (802 aa).

A mitochondrion-targeting transit peptide spans 1 to 38 (MAHRCLLLWSRGGCRRGLPPLLVPRGCLGPDRRPCLRT). A propeptide spans 39–66 (LYQYATVQTASSRRSLLRDVIAAYQRFC) (removed in mature form). Positions 76–124 (YFPNGKNGKKASEPKEAVGEKKEPQPSGPQPSGGAGGGGGKRRGKKEDS) are disordered. The span at 85–99 (KASEPKEAVGEKKEP) shows a compositional bias: basic and acidic residues. Lys116 is modified (N6-succinyllysine). 2 helical membrane passes run 142–162 (FRMY…YFVF) and 250–270 (GSFL…LYTI). Residues Val309, Ala310, Thr351, Gly352, Lys353, Thr354, Leu355, and His489 each contribute to the ATP site. Residue His573 coordinates Zn(2+). Residue Glu574 is part of the active site. The Zn(2+) site is built by His577 and Asp648. A disordered region spans residues 759–802 (VEGTGSLDEDTSLPEGLQDWNKEREKEEKKEKEKEEPLNEKVVS). Residues 778–802 (WNKEREKEEKKEKEKEEPLNEKVVS) show a composition bias toward basic and acidic residues.

This sequence in the N-terminal section; belongs to the AAA ATPase family. In the C-terminal section; belongs to the peptidase M41 family. In terms of assembly, homohexamer. Forms heterohexamers with SPG7 and AFG3L1. The m-AAA protease is either composed of homohexamers of AFG3L2 or heterohexamers of AFG3L1, AFG3L2 and/or SPG7. Interacts with MAIP1. Interacts with DNAJC19. Interacts with PHB2. Zn(2+) is required as a cofactor. Upon import into the mitochondrion, the N-terminal transit peptide is cleaved to generate an intermediate form which undergoes autocatalytic proteolytic processing to generate the proteolytically active mature form. As to expression, highly expressed in the cerebellar Purkinje cells.

The protein localises to the mitochondrion inner membrane. The catalysed reaction is ATP + H2O = ADP + phosphate + H(+). In terms of biological role, catalytic component of the m-AAA protease, a protease that plays a key role in proteostasis of inner mitochondrial membrane proteins, and which is essential for axonal and neuron development. AFG3L2 possesses both ATPase and protease activities: the ATPase activity is required to unfold substrates, threading them into the internal proteolytic cavity for hydrolysis into small peptide fragments. The m-AAA protease carries out protein quality control in the inner membrane of the mitochondria by mediating degradation of mistranslated or misfolded polypeptides. The m-AAA protease complex also promotes the processing and maturation of mitochondrial proteins, such as MRPL32/bL32m, PINK1 and SP7. Mediates protein maturation of the mitochondrial ribosomal subunit MRPL32/bL32m by catalyzing the cleavage of the presequence of MRPL32/bL32m prior to assembly into the mitochondrial ribosome. Required for SPG7 maturation into its active mature form after SPG7 cleavage by mitochondrial-processing peptidase (MPP). Required for the maturation of PINK1 into its 52kDa mature form after its cleavage by mitochondrial-processing peptidase (MPP). Acts as a regulator of calcium in neurons by mediating degradation of SMDT1/EMRE before its assembly with the uniporter complex, limiting the availability of SMDT1/EMRE for MCU assembly and promoting efficient assembly of gatekeeper subunits with MCU. Promotes the proteolytic degradation of GHITM upon hyperpolarization of mitochondria: progressive GHITM degradation leads to respiratory complex I degradation and broad reshaping of the mitochondrial proteome by AFG3L2. Also acts as a regulator of mitochondrial glutathione homeostasis by mediating cleavage and degradation of SLC25A39. SLC25A39 cleavage is prevented when SLC25A39 binds iron-sulfur. Involved in the regulation of OMA1-dependent processing of OPA1. May act by mediating processing of OMA1 precursor, participating in OMA1 maturation. The protein is Mitochondrial inner membrane m-AAA protease component AFG3L2 of Mus musculus (Mouse).